A 3470-amino-acid chain; its full sequence is Dynein axonemal heavy chain 5 (3470 aa).

The interval 1-1938 (MFRIGRRQLW…MIHITDVAFT (1938 aa)) is stem. A disordered region spans residues 899-918 (EKVRHENASPNGDTSGGGEG). 4 AAA regions span residues 1939-2161 (YQNE…VLRT), 2221-2440 (TAIS…IQNL), 2547-2800 (VYPP…IWQG), and 2913-3167 (LYNE…FRRS). Residues 1977-1984 (GPAGTGKT) and 2259-2266 (GPSGSGKT) each bind ATP. Coiled-coil stretches lie at residues 3207-3241 (LKEASESVAALSQELAVKEKELQVANEKADMVLKE) and 3434-3468 (HALAMQDLQKAQAELDDKQAELDVVQAEYEQAMTE).

It belongs to the dynein heavy chain family. As to quaternary structure, interacts with DNAL1. Consists of at least two heavy chains and a number of intermediate and light chains.

The protein resides in the cytoplasm. The protein localises to the cytoskeleton. Its subcellular location is the cilium axoneme. Functionally, force generating protein of respiratory cilia. Produces force towards the minus ends of microtubules. Dynein has ATPase activity; the force-producing power stroke is thought to occur on release of ADP. Required for structural and functional integrity of the cilia of ependymal cells lining the brain ventricles. This Rattus norvegicus (Rat) protein is Dynein axonemal heavy chain 5.